The primary structure comprises 178 residues: 5,6,7,8-tetrahydromethanopterin hydro-lyase (178 aa).

H33 functions as the Proton donor in the catalytic mechanism. Residues D35, L64, K82, T84, and Q99 each contribute to the substrate site.

Belongs to the formaldehyde-activating enzyme family.

The protein resides in the cytoplasm. It carries out the reaction 5,6,7,8-tetrahydromethanopterin + formaldehyde = 5,10-methylenetetrahydromethanopterin + H2O. Catalyzes the condensation of formaldehyde with tetrahydromethanopterin (H(4)MPT) to 5,10-methylenetetrahydromethanopterin. This chain is 5,6,7,8-tetrahydromethanopterin hydro-lyase (faeA), found in Methanosarcina barkeri (strain Fusaro / DSM 804).